A 338-amino-acid chain; its full sequence is Extracellular globin (338 aa).

The signal sequence occupies residues 1–18; it reads MRSLLLLSIVFFVVTVSA. Asparagine 19 is a glycosylation site (N-linked (GlcNAc...) asparagine). 2 Globin domains span residues 25–167 and 174–316; these read CMKS…KHGR and CMRS…RHGK. Heme b is bound by residues glutamine 82 and histidine 114. The N-linked (GlcNAc...) asparagine glycan is linked to asparagine 216. The heme b site is built by glutamine 231 and histidine 263. Residues 313–338 form a disordered region; it reads RHGKEHHEHKEEHKEEHKEEHKEEQH.

This sequence belongs to the globin family. Homooctamer.

Its subcellular location is the secreted. The protein resides in the extracellular space. Has an extremely high oxygen affinity. In a vacuum, it takes several minutes to release its oxygen compared to milliseconds for a normal globin. Could be used as an oxygen scavenger for sterol biosynthesis. The polypeptide is Extracellular globin (Ascaris suum (Pig roundworm)).